We begin with the raw amino-acid sequence, 389 residues long: Tubby-like F-box protein 11 (389 aa).

In terms of domain architecture, F-box spans 36–82; that stretch reads DYRWSEIPEELLREILIRVEAADGGGWPSRRSVVACAGVCRGWRLLM. A disordered region spans residues 250–289; the sequence is STMEPQGVASEPSEFPLLGTRSTLSRSQSKPLRSSSSHLK. The segment covering 273 to 286 has biased composition (low complexity); the sequence is LSRSQSKPLRSSSS.

This sequence belongs to the TUB family. In terms of tissue distribution, ubiquitous.

The polypeptide is Tubby-like F-box protein 11 (Arabidopsis thaliana (Mouse-ear cress)).